The following is a 149-amino-acid chain: 3-dehydroquinate dehydratase (149 aa).

Tyr-26 serves as the catalytic Proton acceptor. Residues Asn-77, His-83, and Asp-90 each contribute to the substrate site. His-103 serves as the catalytic Proton donor. Substrate contacts are provided by residues 104–105 and Arg-114; that span reads LS.

This sequence belongs to the type-II 3-dehydroquinase family. As to quaternary structure, homododecamer.

It catalyses the reaction 3-dehydroquinate = 3-dehydroshikimate + H2O. The protein operates within metabolic intermediate biosynthesis; chorismate biosynthesis; chorismate from D-erythrose 4-phosphate and phosphoenolpyruvate: step 3/7. Catalyzes a trans-dehydration via an enolate intermediate. The sequence is that of 3-dehydroquinate dehydratase from Haemophilus influenzae (strain 86-028NP).